The following is a 687-amino-acid chain: Polyphosphate kinase (687 aa).

Position 45 (Asn45) interacts with ATP. The Mg(2+) site is built by Arg375 and Arg405. His435 serves as the catalytic Phosphohistidine intermediate. 3 residues coordinate ATP: Tyr472, Arg568, and His596.

The protein belongs to the polyphosphate kinase 1 (PPK1) family. Requires Mg(2+) as cofactor. Post-translationally, an intermediate of this reaction is the autophosphorylated ppk in which a phosphate is covalently linked to a histidine residue through a N-P bond.

It catalyses the reaction [phosphate](n) + ATP = [phosphate](n+1) + ADP. Its function is as follows. Catalyzes the reversible transfer of the terminal phosphate of ATP to form a long-chain polyphosphate (polyP). This chain is Polyphosphate kinase, found in Burkholderia multivorans (strain ATCC 17616 / 249).